Here is a 304-residue protein sequence, read N- to C-terminus: Probable porphobilinogen deaminase (304 aa).

Cys-240 is modified (S-(dipyrrolylmethanemethyl)cysteine).

This sequence belongs to the HMBS family. Dipyrromethane serves as cofactor.

It carries out the reaction 4 porphobilinogen + H2O = hydroxymethylbilane + 4 NH4(+). Its pathway is porphyrin-containing compound metabolism; protoporphyrin-IX biosynthesis; coproporphyrinogen-III from 5-aminolevulinate: step 2/4. Its function is as follows. Tetrapolymerization of the monopyrrole PBG into the hydroxymethylbilane pre-uroporphyrinogen in several discrete steps. This Ignicoccus hospitalis (strain KIN4/I / DSM 18386 / JCM 14125) protein is Probable porphobilinogen deaminase.